The following is a 289-amino-acid chain: Spore coat polysaccharide biosynthesis protein SpsD (289 aa).

One can recognise an N-acetyltransferase domain in the interval 137–289 (FELGPPEPGD…YHIWPGKEAK (153 aa)).

It functions in the pathway spore coat biogenesis; spore coat polysaccharide biosynthesis. The chain is Spore coat polysaccharide biosynthesis protein SpsD (spsD) from Bacillus subtilis (strain 168).